We begin with the raw amino-acid sequence, 65 residues long: Weak toxin CM-13b (65 aa).

5 disulfide bridges follow: C3–C24, C6–C11, C17–C42, C46–C57, and C58–C63.

The protein belongs to the three-finger toxin family. Ancestral subfamily. Orphan group II sub-subfamily. Expressed by the venom gland.

It is found in the secreted. In terms of biological role, binds with low affinity to muscular (alpha-1-beta-1-delta-epsilon/CHRNA1-CHRNB1-CHRND-CHRNE) and very low affinity to neuronal (alpha-7/CHRNA7) nicotinic acetylcholine receptor (nAChR). The sequence is that of Weak toxin CM-13b from Naja annulifera (Banded Egyptian cobra).